We begin with the raw amino-acid sequence, 328 residues long: Transcription initiation factor IIE subunit beta (328 aa).

Residues 32–105 (QKKTNDTVIT…SSPSKKVRPG (74 aa)) form a disordered region. At S52 the chain carries Phosphoserine. Residues 85-94 (LDDDDDDEDF) are compositionally biased toward acidic residues. 2 positions are modified to phosphoserine: S97 and S106. Positions 113 to 187 (QANQTDISKS…FKYLSTYDVH (75 aa)) form a DNA-binding region, TFIIE beta.

It belongs to the TFIIE beta subunit family. TFIIE is a tetramer of two alpha (TFA1) and two beta (TFA2) subunits.

It localises to the nucleus. In terms of biological role, recruits TFIIH to the initiation complex and stimulates the RNA polymerase II C-terminal domain kinase and DNA-dependent ATPase activities of TFIIH. Both TFIIH and TFIIE are required for promoter clearance by RNA polymerase. The polypeptide is Transcription initiation factor IIE subunit beta (TFA2) (Saccharomyces cerevisiae (strain ATCC 204508 / S288c) (Baker's yeast)).